We begin with the raw amino-acid sequence, 1274 residues long: Myosin-binding protein C, cardiac-type (1274 aa).

Met1 is subject to N-acetylmethionine. The region spanning 8–95 is the Ig-like C2-type 1 domain; that stretch reads PVSAFTKKPR…SKVKFDLKVT (88 aa). Ser47 carries the phosphoserine modification. Residues 95-104 are compositionally biased toward basic and acidic residues; it reads TEPAPPEKAE. Residues 95–153 are disordered; it reads TEPAPPEKAESAVAPTSMEAPETPKEVPALATQLEGNVSSPEGSVSVTQDGSVAGSQGA. Thr117 bears the Phosphothreonine mark. Residues 128-149 are compositionally biased toward polar residues; that stretch reads LEGNVSSPEGSVSVTQDGSVAG. The 103-residue stretch at 157 to 259 folds into the Ig-like C2-type 2 domain; it reads PIGLFLMRPQ…KFDSCNFNLT (103 aa). Zn(2+) is bound by residues Gln212, His214, Glu227, and His229. Residue Ser279 is modified to Phosphoserine. The residue at position 287 (Thr287) is a Phosphothreonine; by PKA and PKC. A Phosphoserine modification is found at Ser288. Residue Ser307 is modified to Phosphoserine; by PKA. Phosphoserine occurs at positions 312 and 427. Ig-like C2-type domains follow at residues 361-452 and 452-546; these read KKST…VKEP and PPVL…KKLE. Cys436 and Cys443 are joined by a disulfide. Ser459 and Ser550 each carry phosphoserine. Thr607 bears the Phosphothreonine mark. An Ig-like C2-type 5 domain is found at 645–765; the sequence is PKIHLDCPGS…PVGEDQVNLT (121 aa). Fibronectin type-III domains follow at residues 774-870 and 872-967; these read APAA…IGPP and EPTH…VQEI. Residues 971-1059 form the Ig-like C2-type 6 domain; that stretch reads PRLQLPRHLR…ENMEDKATLV (89 aa). The Fibronectin type-III 3 domain maps to 1068–1163; it reads PPLDIRVVET…TKEPIFIPRP (96 aa). Residues 1181–1269 enclose the Ig-like C2-type 7 domain; the sequence is PSFTQPLTNR…GEAQCECRLE (89 aa). Omega-N-methylarginine is present on Arg1241.

This sequence belongs to the immunoglobulin superfamily. MyBP family. Substrate for phosphorylation by PKA and PKC. Reversible phosphorylation appears to modulate contraction. Post-translationally, polyubiquitinated.

Its function is as follows. Thick filament-associated protein located in the crossbridge region of vertebrate striated muscle a bands. In vitro it binds MHC, F-actin and native thin filaments, and modifies the activity of actin-activated myosin ATPase. It may modulate muscle contraction or may play a more structural role. In Rattus norvegicus (Rat), this protein is Myosin-binding protein C, cardiac-type (Mybpc3).